The primary structure comprises 71 residues: Small ribosomal subunit protein bS18c (71 aa).

It belongs to the bacterial ribosomal protein bS18 family. Part of the 30S ribosomal subunit.

The protein localises to the plastid. It is found in the chloroplast. This Mesostigma viride (Green alga) protein is Small ribosomal subunit protein bS18c (rps18).